The primary structure comprises 477 residues: Glutamyl-tRNA reductase (477 aa).

Substrate-binding positions include 49 to 52 (TCNR), S109, 114 to 116 (EQQ), and Q120. C50 functions as the Nucleophile in the catalytic mechanism. 189–194 (GAGAMG) contacts NADP(+).

Belongs to the glutamyl-tRNA reductase family. Homodimer.

The enzyme catalyses (S)-4-amino-5-oxopentanoate + tRNA(Glu) + NADP(+) = L-glutamyl-tRNA(Glu) + NADPH + H(+). It functions in the pathway porphyrin-containing compound metabolism; protoporphyrin-IX biosynthesis; 5-aminolevulinate from L-glutamyl-tRNA(Glu): step 1/2. Catalyzes the NADPH-dependent reduction of glutamyl-tRNA(Glu) to glutamate 1-semialdehyde (GSA). In Nocardia farcinica (strain IFM 10152), this protein is Glutamyl-tRNA reductase.